The chain runs to 138 residues: Basic phospholipase A2 homolog Ts-K49a (138 aa).

The first 16 residues, 1 to 16 (MRTLWIMAVLLLGVEG), serve as a signal peptide directing secretion. 7 cysteine pairs are disulfide-bonded: C42–C131, C44–C60, C59–C111, C65–C138, C66–C104, C73–C97, and C91–C102. Residues 121–133 (KKKKINLKLFCKK) form an important for membrane-damaging activities in eukaryotes and bacteria; heparin-binding region.

In terms of tissue distribution, expressed by the venom gland.

It localises to the secreted. Snake venom phospholipase A2 homolog that lacks catalytic activity. It shows myotoxic and weak anticoagulant activities and induces local edema a few hours after injection (5-10 ug) in the hind paw. A model of myotoxic mechanism has been proposed: an apo Lys49-PLA2 is activated by the entrance of a hydrophobic molecule (e.g. fatty acid) at the hydrophobic channel of the protein leading to a reorientation of a monomer. This reorientation causes a transition between 'inactive' to 'active' states, causing alignment of C-terminal and membrane-docking sites (MDoS) side-by-side and putting the membrane-disruption sites (MDiS) in the same plane, exposed to solvent and in a symmetric position for both monomers. The MDoS region stabilizes the toxin on membrane by the interaction of charged residues with phospholipid head groups. Subsequently, the MDiS region destabilizes the membrane with penetration of hydrophobic residues. This insertion causes a disorganization of the membrane, allowing an uncontrolled influx of ions (i.e. calcium and sodium), and eventually triggering irreversible intracellular alterations and cell death. The sequence is that of Basic phospholipase A2 homolog Ts-K49a from Trimeresurus stejnegeri (Chinese green tree viper).